The following is a 354-amino-acid chain: MFPKNAWYVACTPDEIADKPLGRQICNEKIVFYRGPEGRVAAVEDFCPHRGAPLSLGFVRDGKLICGYHGLEMGCEGKTLAMPGQRVQGFPCIKSYAVEERYGFIWVWPGDRELADPALIHHLEWADNPEWAYGGGLYHIACDYRLMIDNLMDLTHETYVHASSIGQKEIDEAPVSTRVEGDTVITSRYMDNVMAPPFWRAALRGNGLADDVPVDRWQICRFAPPSHVLIEVGVAHAGKGGYDAPAEYKAGSIVVDFITPESDTSIWYFWGMARNFRPQGTELTETIRVGQGKIFAEDLDMLEQQQRNLLAYPERQLLKLNIDAGGVQSRRVIDRILAAEQEAADAALIARSAS.

Residues 7 to 107 (WYVACTPDEI…VEERYGFIWV (101 aa)) form the Rieske domain. [2Fe-2S] cluster-binding residues include Cys-47, His-49, Cys-66, and His-69.

It belongs to the bacterial ring-hydroxylating dioxygenase alpha subunit family. In terms of assembly, this demethylase system consists of two proteins: an oxygenase and an oxygenase reductase. It depends on [2Fe-2S] cluster as a cofactor. Fe cation is required as a cofactor.

The enzyme catalyses vanillate + NADH + O2 + H(+) = 3,4-dihydroxybenzoate + formaldehyde + NAD(+) + H2O. Its pathway is xenobiotic degradation; vanillyl-alcohol degradation. This is Vanillate O-demethylase oxygenase subunit (vanA) from Pseudomonas sp. (strain HR199 / DSM 7063).